The sequence spans 184 residues: NADH-quinone oxidoreductase subunit B (184 aa).

[4Fe-4S] cluster is bound by residues cysteine 37, cysteine 38, cysteine 103, and cysteine 132.

The protein belongs to the complex I 20 kDa subunit family. As to quaternary structure, NDH-1 is composed of 14 different subunits. Subunits NuoB, C, D, E, F, and G constitute the peripheral sector of the complex. [4Fe-4S] cluster is required as a cofactor.

The protein localises to the cell membrane. The catalysed reaction is a quinone + NADH + 5 H(+)(in) = a quinol + NAD(+) + 4 H(+)(out). NDH-1 shuttles electrons from NADH, via FMN and iron-sulfur (Fe-S) centers, to quinones in the respiratory chain. The immediate electron acceptor for the enzyme in this species is believed to be a menaquinone. Couples the redox reaction to proton translocation (for every two electrons transferred, four hydrogen ions are translocated across the cytoplasmic membrane), and thus conserves the redox energy in a proton gradient. The chain is NADH-quinone oxidoreductase subunit B from Mycolicibacterium smegmatis (strain ATCC 700084 / mc(2)155) (Mycobacterium smegmatis).